Reading from the N-terminus, the 121-residue chain is T cell receptor alpha variable 23/delta variable 6 (121 aa).

Residues 1–21 (MDKILGASFLVLWLQLCWVSG) form the signal peptide. In terms of domain architecture, Ig-like spans 30-121 (QQVKQSPQSL…DSATYFCAAS (92 aa)). Cysteines 51 and 118 form a disulfide. An N-linked (GlcNAc...) asparagine glycan is attached at asparagine 95.

In terms of assembly, alpha-beta TR is a heterodimer composed of an alpha and beta chain; disulfide-linked. The alpha-beta TR is associated with the transmembrane signaling CD3 coreceptor proteins to form the TR-CD3 (TcR or TCR). The assembly of alpha-beta TR heterodimers with CD3 occurs in the endoplasmic reticulum where a single alpha-beta TR heterodimer associates with one CD3D-CD3E heterodimer, one CD3G-CD3E heterodimer and one CD247 homodimer forming a stable octameric structure. CD3D-CD3E and CD3G-CD3E heterodimers preferentially associate with TR alpha and TR beta chains, respectively. The association of the CD247 homodimer is the last step of TcR assembly in the endoplasmic reticulum and is required for transport to the cell surface.

Its subcellular location is the cell membrane. In terms of biological role, v region of the variable domain of T cell receptor (TR) alpha chain that participates in the antigen recognition. Alpha-beta T cell receptors are antigen specific receptors which are essential to the immune response and are present on the cell surface of T lymphocytes. Recognize peptide-major histocompatibility (MH) (pMH) complexes that are displayed by antigen presenting cells (APC), a prerequisite for efficient T cell adaptive immunity against pathogens. Binding of alpha-beta TR to pMH complex initiates TR-CD3 clustering on the cell surface and intracellular activation of LCK that phosphorylates the ITAM motifs of CD3G, CD3D, CD3E and CD247 enabling the recruitment of ZAP70. In turn ZAP70 phosphorylates LAT, which recruits numerous signaling molecules to form the LAT signalosome. The LAT signalosome propagates signal branching to three major signaling pathways, the calcium, the mitogen-activated protein kinase (MAPK) kinase and the nuclear factor NF-kappa-B (NF-kB) pathways, leading to the mobilization of transcription factors that are critical for gene expression and essential for T cell growth and differentiation. The T cell repertoire is generated in the thymus, by V-(D)-J rearrangement. This repertoire is then shaped by intrathymic selection events to generate a peripheral T cell pool of self-MH restricted, non-autoaggressive T cells. Post-thymic interaction of alpha-beta TR with the pMH complexes shapes TR structural and functional avidity. The chain is T cell receptor alpha variable 23/delta variable 6 from Homo sapiens (Human).